A 224-amino-acid polypeptide reads, in one-letter code: Phosphoribosylformylglycinamidine synthase subunit PurQ (224 aa).

One can recognise a Glutamine amidotransferase type-1 domain in the interval 2–224 (KFAVIVFPGS…IVDNFVKGGV (223 aa)). Cysteine 86 (nucleophile) is an active-site residue. Catalysis depends on residues histidine 194 and glutamate 196.

In terms of assembly, part of the FGAM synthase complex composed of 1 PurL, 1 PurQ and 2 PurS subunits.

The protein localises to the cytoplasm. It carries out the reaction N(2)-formyl-N(1)-(5-phospho-beta-D-ribosyl)glycinamide + L-glutamine + ATP + H2O = 2-formamido-N(1)-(5-O-phospho-beta-D-ribosyl)acetamidine + L-glutamate + ADP + phosphate + H(+). The catalysed reaction is L-glutamine + H2O = L-glutamate + NH4(+). The protein operates within purine metabolism; IMP biosynthesis via de novo pathway; 5-amino-1-(5-phospho-D-ribosyl)imidazole from N(2)-formyl-N(1)-(5-phospho-D-ribosyl)glycinamide: step 1/2. Its function is as follows. Part of the phosphoribosylformylglycinamidine synthase complex involved in the purines biosynthetic pathway. Catalyzes the ATP-dependent conversion of formylglycinamide ribonucleotide (FGAR) and glutamine to yield formylglycinamidine ribonucleotide (FGAM) and glutamate. The FGAM synthase complex is composed of three subunits. PurQ produces an ammonia molecule by converting glutamine to glutamate. PurL transfers the ammonia molecule to FGAR to form FGAM in an ATP-dependent manner. PurS interacts with PurQ and PurL and is thought to assist in the transfer of the ammonia molecule from PurQ to PurL. The sequence is that of Phosphoribosylformylglycinamidine synthase subunit PurQ from Caldanaerobacter subterraneus subsp. tengcongensis (strain DSM 15242 / JCM 11007 / NBRC 100824 / MB4) (Thermoanaerobacter tengcongensis).